The primary structure comprises 196 residues: Glycerol-3-phosphate acyltransferase (196 aa).

5 consecutive transmembrane segments (helical) span residues 4-24 (FYIMLLAAYLIGAIPTGVVLT), 53-73 (LGVLTLIGDALKGAVPVLIAI), 78-98 (LGDAQVGAVAAAAFIGHCYPV), 114-134 (IFLVLSPLAVLGAFAVFALLV), and 140-160 (VSLGSICAAAAIPILVYFTEG).

The protein belongs to the PlsY family. Probably interacts with PlsX.

It localises to the cell inner membrane. It carries out the reaction an acyl phosphate + sn-glycerol 3-phosphate = a 1-acyl-sn-glycero-3-phosphate + phosphate. It participates in lipid metabolism; phospholipid metabolism. Its function is as follows. Catalyzes the transfer of an acyl group from acyl-phosphate (acyl-PO(4)) to glycerol-3-phosphate (G3P) to form lysophosphatidic acid (LPA). This enzyme utilizes acyl-phosphate as fatty acyl donor, but not acyl-CoA or acyl-ACP. This chain is Glycerol-3-phosphate acyltransferase, found in Syntrophotalea carbinolica (strain DSM 2380 / NBRC 103641 / GraBd1) (Pelobacter carbinolicus).